Reading from the N-terminus, the 479-residue chain is Probable acyl-CoA desaturase (479 aa).

Over residues 1 to 18 (MTAPSATAFSSATTQPTT) the composition is skewed to low complexity. Residues 1–28 (MTAPSATAFSSATTQPTTEGNASMRKRT) form a disordered region. At 1 to 61 (MTAPSATAFS…PWTMQNWWRH (61 aa)) the chain is on the cytoplasmic side. Residues 62–82 (LNWLHCMLIFGLPMIAIYGVF) form a helical membrane-spanning segment. Over 83–89 (TTPLQTK) the chain is Lumenal. A helical membrane pass occupies residues 90 to 110 (TLIFAIIYYAYSGLGITAGYH). Fe cation is bound by residues histidine 110, histidine 115, histidine 147, histidine 150, and histidine 151. The Histidine box-1 motif lies at 110–115 (HRLWSH). Over 111–204 (RLWSHRAYKA…DPFVMFNHRH (94 aa)) the chain is Cytoplasmic. The Histidine box-2 signature appears at 147–151 (HRAHH). Residues 205–225 (FLPIASFMAFIFPSLFCGLLW) traverse the membrane as a helical segment. Residues 226–229 (GDYR) lie on the Lumenal side of the membrane. The chain crosses the membrane as a helical span at residues 230-250 (GGYFYAGVCRLVFVHHATFCV). The Cytoplasmic portion of the chain corresponds to 251-479 (NSLAHLIGSQ…QPPIEAAAAN (229 aa)). Histidine 255, histidine 284, histidine 287, and histidine 288 together coordinate Fe cation. Residues 284–288 (HNYHH) carry the Histidine box-3 motif. The region spanning 357–433 (QLPVMEFEDF…LSTYRVAVVR (77 aa)) is the Cytochrome b5 heme-binding domain. Heme-binding residues include histidine 390 and histidine 416.

This sequence belongs to the fatty acid desaturase type 1 family. It depends on Fe(2+) as a cofactor.

The protein localises to the membrane. It carries out the reaction octadecanoyl-CoA + 2 Fe(II)-[cytochrome b5] + O2 + 2 H(+) = (9Z)-octadecenoyl-CoA + 2 Fe(III)-[cytochrome b5] + 2 H2O. Stearoyl-CoA desaturase that utilizes O(2) and electrons from reduced cytochrome b5 to introduce the first double bond into saturated fatty acyl-CoA substrates. Catalyzes the insertion of a cis double bond at the delta-9 position into fatty acyl-CoA substrates including palmitoyl-CoA and stearoyl-CoA. Contributes to the biosynthesis of membrane phospholipids, cholesterol esters and triglycerides. The polypeptide is Probable acyl-CoA desaturase (Schizosaccharomyces pombe (strain 972 / ATCC 24843) (Fission yeast)).